Consider the following 503-residue polypeptide: Cytochrome P450 7A1 (503 aa).

The chain crosses the membrane as a helical span at residues 4–24 (ISLIWGIAVVVSCCIWFIIGI). Cys444 contributes to the heme binding site.

The protein belongs to the cytochrome P450 family. Heme is required as a cofactor.

Its subcellular location is the endoplasmic reticulum membrane. It is found in the microsome membrane. It catalyses the reaction cholesterol + reduced [NADPH--hemoprotein reductase] + O2 = 7alpha-hydroxycholesterol + oxidized [NADPH--hemoprotein reductase] + H2O + H(+). The catalysed reaction is 4beta-hydroxycholesterol + reduced [NADPH--hemoprotein reductase] + O2 = 4beta,7alpha-dihydroxycholesterol + oxidized [NADPH--hemoprotein reductase] + H2O + H(+). It carries out the reaction lathosterol + reduced [NADPH--hemoprotein reductase] + O2 = 7alpha,8alpha-epoxy-5alpha-cholestan-3beta-ol + oxidized [NADPH--hemoprotein reductase] + H2O + H(+). The enzyme catalyses lathosterol + reduced [NADPH--hemoprotein reductase] + O2 = 5alpha-cholestan-7-oxo-3beta-ol + oxidized [NADPH--hemoprotein reductase] + H2O + H(+). It catalyses the reaction 7-dehydrocholesterol + reduced [NADPH--hemoprotein reductase] + O2 = 7-oxocholesterol + oxidized [NADPH--hemoprotein reductase] + H2O + H(+). The catalysed reaction is (24S)-hydroxycholesterol + reduced [NADPH--hemoprotein reductase] + O2 = (24S)-7alpha-dihydroxycholesterol + oxidized [NADPH--hemoprotein reductase] + H2O + H(+). It carries out the reaction (24R)-hydroxycholesterol + reduced [NADPH--hemoprotein reductase] + O2 = (24R)-7alpha-dihydroxycholesterol + oxidized [NADPH--hemoprotein reductase] + H2O + H(+). It participates in lipid metabolism; bile acid biosynthesis. It functions in the pathway steroid metabolism; cholesterol degradation. A cytochrome P450 monooxygenase involved in the metabolism of endogenous cholesterol and its oxygenated derivatives (oxysterols). Mechanistically, uses molecular oxygen inserting one oxygen atom into a substrate, and reducing the second into a water molecule, with two electrons provided by NADPH via cytochrome P450 reductase (CPR; NADPH-ferrihemoprotein reductase). Functions as a critical regulatory enzyme of bile acid biosynthesis and cholesterol homeostasis. Catalyzes the hydroxylation of carbon hydrogen bond at 7-alpha position of cholesterol, a rate-limiting step in cholesterol catabolism and bile acid biosynthesis. 7-alpha hydroxylates several oxysterols, including 4beta-hydroxycholesterol and 24-hydroxycholesterol. Catalyzes the oxidation of the 7,8 double bond of 7-dehydrocholesterol and lathosterol with direct and predominant formation of the 7-keto derivatives. This is Cytochrome P450 7A1 from Mus musculus (Mouse).